Reading from the N-terminus, the 56-residue chain is Large ribosomal subunit protein bL32B (56 aa).

Over residues 1–19 (MAVPKRRMSRSNTRHRRAQ) the composition is skewed to basic residues. A disordered region spans residues 1 to 22 (MAVPKRRMSRSNTRHRRAQWKA).

Belongs to the bacterial ribosomal protein bL32 family.

In Streptomyces coelicolor (strain ATCC BAA-471 / A3(2) / M145), this protein is Large ribosomal subunit protein bL32B (rpmF2).